A 562-amino-acid polypeptide reads, in one-letter code: Formate--tetrahydrofolate ligase (562 aa).

71–78 is an ATP binding site; it reads TPAGEGKS.

This sequence belongs to the formate--tetrahydrofolate ligase family.

It catalyses the reaction (6S)-5,6,7,8-tetrahydrofolate + formate + ATP = (6R)-10-formyltetrahydrofolate + ADP + phosphate. It functions in the pathway one-carbon metabolism; tetrahydrofolate interconversion. The chain is Formate--tetrahydrofolate ligase from Bacillus cereus (strain ATCC 14579 / DSM 31 / CCUG 7414 / JCM 2152 / NBRC 15305 / NCIMB 9373 / NCTC 2599 / NRRL B-3711).